The primary structure comprises 342 residues: MSNPCLTMNITKDNLKFFVLNGKYILESNNDMMFAINTKRIIADKYDFGIIINSSIYNKYLQNIGCPLYSPTEIFNYYQLIVNHQFTQADGKLFEDRIKFIFVNLETICDRSNYTDFVSWYLTVIDDIDNYKNVFIVINELNVQDDIDSENMDDLDDMDHYVSNFLNLLLATVNKNTYVLSSDSEYFAHVSLYGKISCDESLNMILCGNIFDNSDCKYFLTNGTSYKFFNGYFVIHRSDNLSGFVGITKDSKNINIDYHYLNMLTVSQIVVHSVIRLLEGYKSSDKKNEVDLYLLRSYHSYIEQNGLISIYKNNLANKNIRSYFLKCKVIDDVMIELTNLLE.

This is an uncharacterized protein from Acanthamoeba polyphaga (Amoeba).